The following is a 213-amino-acid chain: Thymidylate kinase (213 aa).

ATP is bound at residue glycine 10–threonine 17.

This sequence belongs to the thymidylate kinase family.

It carries out the reaction dTMP + ATP = dTDP + ADP. In terms of biological role, phosphorylation of dTMP to form dTDP in both de novo and salvage pathways of dTTP synthesis. This Enterobacter sp. (strain 638) protein is Thymidylate kinase.